The chain runs to 299 residues: Mitochondrial magnesium exporter 1 (299 aa).

Solcar repeat units lie at residues 12–103 (SNPV…GKRL), 112–200 (LTYP…LQEL), and 210–296 (ISTT…TNDL). The next 4 helical transmembrane spans lie at 79–99 (ISAP…VYAA), 114–134 (YPQI…VTVP), 216–236 (ILSG…FDVL), and 272–292 (ILPI…GVEL).

Belongs to the mitochondrial carrier (TC 2.A.29) family.

It localises to the mitochondrion membrane. Mediates efflux of magnesium ions from mitochondria, suggesting a role in magnesium homeostasis. The protein is Mitochondrial magnesium exporter 1 of Drosophila melanogaster (Fruit fly).